A 478-amino-acid chain; its full sequence is MTLSFVTRWRDELPETYTALSPTPLNNARLVWHNTELANTLSIPSSLFKNGAGVWGGEALLPGMSPLAQVYSGHQFGVWAGQLGDGRGILLGEQLLADGTTMDWHLKGAGLTPYSRMGDGRAVLRSTIRESLASEAMHYLGIPTTRALSIVTSDSPVYRETAEPGAMLMRVAPSHLRFGHFEHFYYRRESEKVRQLADFAIRHYWSHLEDDEDKYRLWFSDVVARTASLIAQWQTVGFAHGVMNTDNMSLLGLTLDYGPFGFLDDYEPGFICNHSDHQGRYSFDNQPAVALWNLQRLAQTLSPFVAVDALNEALDSYQQVLLTHYGQRMRQKLGFMTEQKEDNALLNELFSLMARERSDYTRTFRMLSLTEQHSAASPLRDEFIDRAAFDDWFARYRGRLQQDEVSDSERQQLMQSVNPALVLRNWLAQRAIEAAEKGDMMELHRLHEALRNPFSDRDDDYVSRPPDWGKRLEVSCSS.

8 residues coordinate ATP: Gly-84, Gly-86, Arg-87, Lys-107, Asp-119, Gly-120, Arg-170, and Arg-177. Asp-246 functions as the Proton acceptor in the catalytic mechanism. Residues Asn-247 and Asp-256 each coordinate Mg(2+). Asp-256 serves as a coordination point for ATP.

It belongs to the SELO family. Mg(2+) is required as a cofactor. The cofactor is Mn(2+).

The catalysed reaction is L-seryl-[protein] + ATP = 3-O-(5'-adenylyl)-L-seryl-[protein] + diphosphate. The enzyme catalyses L-threonyl-[protein] + ATP = 3-O-(5'-adenylyl)-L-threonyl-[protein] + diphosphate. It carries out the reaction L-tyrosyl-[protein] + ATP = O-(5'-adenylyl)-L-tyrosyl-[protein] + diphosphate. It catalyses the reaction L-histidyl-[protein] + UTP = N(tele)-(5'-uridylyl)-L-histidyl-[protein] + diphosphate. The catalysed reaction is L-seryl-[protein] + UTP = O-(5'-uridylyl)-L-seryl-[protein] + diphosphate. The enzyme catalyses L-tyrosyl-[protein] + UTP = O-(5'-uridylyl)-L-tyrosyl-[protein] + diphosphate. Nucleotidyltransferase involved in the post-translational modification of proteins. It can catalyze the addition of adenosine monophosphate (AMP) or uridine monophosphate (UMP) to a protein, resulting in modifications known as AMPylation and UMPylation. This chain is Protein nucleotidyltransferase YdiU, found in Shigella boydii serotype 18 (strain CDC 3083-94 / BS512).